The chain runs to 632 residues: Palmitoyltransferase ZDHHC17 (632 aa).

The Cytoplasmic segment spans residues 1 to 304 (MQREEGFNTK…LKADKEFRQK (304 aa)). A necessary and sufficient for interaction with DNAJC5 and SNAP25 region spans residues 11-305 (MADGPDEYDT…KADKEFRQKV (295 aa)). ANK repeat units follow at residues 51-86 (THIDDYSTWDIVKATQYGIYERCRELVEAGYDVRQP), 89-118 (ENVTLLHWAAINNRIDLVKYYISKGAIVDQ), 123-152 (LNSTPLHWATRQGHLSMVVQLMKYGADPSL), 156-185 (EGCSCIHLAAQFGHTSIVAYLIAKGQDVDM), 189-219 (NGMTPLMWAAYRTHSVDPTRLLLTFNVSVNL), 224-253 (HKNTALHWAVLAGNTTVISLLLEAGANVDA), and 257-286 (KGESALDLAKQRKNVWMINHLQEARQAKGY). 2 consecutive transmembrane segments (helical) span residues 305–325 (VMLGTPFLVIWLVGFIADLNI) and 326–346 (DSWLIKGLMYGGVWATVQFLS). At 347–357 (KSFFDHSMHSA) the chain is on the cytoplasmic side. The chain crosses the membrane as a helical span at residues 358–378 (LPLGIYLATKFWMYVTWFFWF). The Lumenal portion of the chain corresponds to 379–381 (WND). The helical transmembrane segment at 382-402 (LNFLFIHLPFLANSVALFYNF) threads the bilayer. Over 403–480 (GKSWKSDPGI…GNCVGAGNHR (78 aa)) the chain is Cytoplasmic. The DHHC domain maps to 437 to 487 (IFCSTCLIRKPVRSKHCGVCNRCIAKFDHHCPWVGNCVGAGNHRYFMGYLF). Catalysis depends on Cys467, which acts as the S-palmitoyl cysteine intermediate. The chain crosses the membrane as a helical span at residues 481-501 (YFMGYLFFLLFMICWMIYGCI). The Lumenal portion of the chain corresponds to 502-529 (SYWGLHCETTYTKDGFWTYITQIATCSP). The helical transmembrane segment at 530-550 (WMFWMFLNSVFHFMWVAVLLM) threads the bilayer. The Cytoplasmic segment spans residues 551–632 (CQMYQISCLG…QISGSGYQLV (82 aa)).

Belongs to the DHHC palmitoyltransferase family. AKR/ZDHHC17 subfamily. In terms of assembly, interacts (via ANK repeats) with numerous proteins (via the consensus sequence motif [VIAP]-[VIT]-x-x-Q-P). Interacts (via ANK repeats) with CLIP3. Interacts (via ANK repeats) with HTT; this interaction is inversely correlated to the length of the polyglutamine tract added to the huntingtin protein in Huntington disease. Interacts (via ANK repeats) with DNAJC5 (via C-terminus). Interacts (via ANK repeats) with MAP6. Interacts (via ANK repeats) with SNAP23. Interacts (via ANK repeats) with SNAP25. Interacts (via ANK repeats) with EVL. Interacts with SPRED1 and SPRED3. Interacts with GPM6A and OPTN. May interact (via ANK repeats) with SPRED2. May interact with NTRK1; may regulate its localization and function. Autopalmitoylated. Autopalmitoylation has a regulatory role in ZDHHC17-mediated Mg(2+) transport. Expressed in all brain regions. Expression is highest in the cortex, cerebellum, occipital lobe and caudate and lowest in the spinal cord. Expression is also seen in testis, pancreas, heart and kidney.

Its subcellular location is the golgi apparatus membrane. It localises to the cytoplasmic vesicle membrane. The protein localises to the presynaptic cell membrane. The catalysed reaction is L-cysteinyl-[protein] + hexadecanoyl-CoA = S-hexadecanoyl-L-cysteinyl-[protein] + CoA. It catalyses the reaction L-cysteinyl-[protein] + tetradecanoyl-CoA = S-tetradecanoyl-L-cysteinyl-[protein] + CoA. The enzyme catalyses L-cysteinyl-[protein] + octadecanoyl-CoA = S-octadecanoyl-L-cysteinyl-[protein] + CoA. Palmitoyltransferase that catalyzes the addition of palmitate onto various protein substrates and is involved in a variety of cellular processes. Has no stringent fatty acid selectivity and in addition to palmitate can also transfer onto target proteins myristate from tetradecanoyl-CoA and stearate from octadecanoyl-CoA. Palmitoyltransferase specific for a subset of neuronal proteins, including SNAP25, DLG4/PSD95, GAD2, SYT1 and HTT. Also palmitoylates neuronal protein GPM6A as well as SPRED1 and SPRED3. Could also play a role in axonogenesis through the regulation of NTRK1 and the downstream ERK1/ERK2 signaling cascade. May be involved in the sorting or targeting of critical proteins involved in the initiating events of endocytosis at the plasma membrane. May play a role in Mg(2+) transport. Could also palmitoylate DNAJC5 and regulate its localization to the Golgi membrane. Palmitoylates CASP6, thereby preventing its dimerization and subsequent activation. In Homo sapiens (Human), this protein is Palmitoyltransferase ZDHHC17.